A 233-amino-acid polypeptide reads, in one-letter code: Phosphoribosylformylglycinamidine synthase subunit PurQ (233 aa).

The Glutamine amidotransferase type-1 domain occupies 3 to 233 (SAILVFPGIN…GLVAHLERAA (231 aa)). The active-site Nucleophile is cysteine 87. Residues histidine 204 and glutamate 206 contribute to the active site.

In terms of assembly, part of the FGAM synthase complex composed of 1 PurL, 1 PurQ and 2 PurS subunits.

It is found in the cytoplasm. It catalyses the reaction N(2)-formyl-N(1)-(5-phospho-beta-D-ribosyl)glycinamide + L-glutamine + ATP + H2O = 2-formamido-N(1)-(5-O-phospho-beta-D-ribosyl)acetamidine + L-glutamate + ADP + phosphate + H(+). It carries out the reaction L-glutamine + H2O = L-glutamate + NH4(+). It functions in the pathway purine metabolism; IMP biosynthesis via de novo pathway; 5-amino-1-(5-phospho-D-ribosyl)imidazole from N(2)-formyl-N(1)-(5-phospho-D-ribosyl)glycinamide: step 1/2. Its function is as follows. Part of the phosphoribosylformylglycinamidine synthase complex involved in the purines biosynthetic pathway. Catalyzes the ATP-dependent conversion of formylglycinamide ribonucleotide (FGAR) and glutamine to yield formylglycinamidine ribonucleotide (FGAM) and glutamate. The FGAM synthase complex is composed of three subunits. PurQ produces an ammonia molecule by converting glutamine to glutamate. PurL transfers the ammonia molecule to FGAR to form FGAM in an ATP-dependent manner. PurS interacts with PurQ and PurL and is thought to assist in the transfer of the ammonia molecule from PurQ to PurL. This Nitrobacter hamburgensis (strain DSM 10229 / NCIMB 13809 / X14) protein is Phosphoribosylformylglycinamidine synthase subunit PurQ.